Consider the following 354-residue polypeptide: MSGNTLGRLFRLTTYGESHGAGLGGVIDGCPAGIALDEAVIQRELDLRRPGGNSASTTRQEPDRVRLLSGVFEGVTTGTPIAFHVENVDQRSRDYGEIARLYRPGHADFTYDAKFGVRDYRGGGRASGRETLSRVAGGAIAQALLARHGIAVRAFTVELGGVPADLVDVAGAQLRPFFSPDPDVVEAWEDMVRTVKGEGDTLGGIVQVEATGVPAGLGEPVFDKLDAVLAYALMSVGAVKGVEVGAGFEAARMHGSDNNDPIVPSGFFTNHAGGILGGISNGETIVLRAAVKPIPSIAQEQITIDRDGKPSALFIAGRHDISAIPRIVPVLKAMTALVLADMLLMQRRMATPQP.

An NADP(+)-binding site is contributed by Arg-48. FMN contacts are provided by residues 125–127 (RAS), Gly-277, 292–296 (KPIPS), and Arg-318.

This sequence belongs to the chorismate synthase family. As to quaternary structure, homotetramer. The cofactor is FMNH2.

The enzyme catalyses 5-O-(1-carboxyvinyl)-3-phosphoshikimate = chorismate + phosphate. The protein operates within metabolic intermediate biosynthesis; chorismate biosynthesis; chorismate from D-erythrose 4-phosphate and phosphoenolpyruvate: step 7/7. Functionally, catalyzes the anti-1,4-elimination of the C-3 phosphate and the C-6 proR hydrogen from 5-enolpyruvylshikimate-3-phosphate (EPSP) to yield chorismate, which is the branch point compound that serves as the starting substrate for the three terminal pathways of aromatic amino acid biosynthesis. This reaction introduces a second double bond into the aromatic ring system. This chain is Chorismate synthase, found in Nitratidesulfovibrio vulgaris (strain DP4) (Desulfovibrio vulgaris).